The chain runs to 209 residues: MSEMQMPEMRYILPSFVEHSSYGAKESNPYNKLFEERIIFLGTQVDDASANDIMAQLLVLEGLDPDRDITMYINSPGGSFTSLMAIYDTMQYVRPDVQTVCLGQAASAAAVLLAAGTPGKRAALPNARVLIHQPATGGVQGQVSDLEIQAKEIERMRKLMEETLARHTGKSAEQVRIDTDRDKILTAEEAKEYGIVDQVFDYRKLSAQN.

Residue Ser107 is the Nucleophile of the active site. Residue His132 is part of the active site.

It belongs to the peptidase S14 family. As to quaternary structure, fourteen ClpP subunits assemble into 2 heptameric rings which stack back to back to give a disk-like structure with a central cavity, resembling the structure of eukaryotic proteasomes.

The protein localises to the cytoplasm. It carries out the reaction Hydrolysis of proteins to small peptides in the presence of ATP and magnesium. alpha-casein is the usual test substrate. In the absence of ATP, only oligopeptides shorter than five residues are hydrolyzed (such as succinyl-Leu-Tyr-|-NHMec, and Leu-Tyr-Leu-|-Tyr-Trp, in which cleavage of the -Tyr-|-Leu- and -Tyr-|-Trp bonds also occurs).. Functionally, cleaves peptides in various proteins in a process that requires ATP hydrolysis. Has a chymotrypsin-like activity. Plays a major role in the degradation of misfolded proteins. The sequence is that of ATP-dependent Clp protease proteolytic subunit 2 from Corynebacterium jeikeium (strain K411).